A 201-amino-acid polypeptide reads, in one-letter code: Large ribosomal subunit protein uL4 (201 aa).

A disordered region spans residues 43-73; the sequence is SRGQKTRAEVTGSGKKPWRQKGTGRARSGSV.

This sequence belongs to the universal ribosomal protein uL4 family. In terms of assembly, part of the 50S ribosomal subunit.

In terms of biological role, one of the primary rRNA binding proteins, this protein initially binds near the 5'-end of the 23S rRNA. It is important during the early stages of 50S assembly. It makes multiple contacts with different domains of the 23S rRNA in the assembled 50S subunit and ribosome. Functionally, forms part of the polypeptide exit tunnel. This is Large ribosomal subunit protein uL4 from Sodalis glossinidius (strain morsitans).